A 201-amino-acid polypeptide reads, in one-letter code: Eukaryotic translation initiation factor 4E-5 (201 aa).

Cysteines 122 and 126 form a disulfide.

Belongs to the eukaryotic initiation factor 4E family. EIF4F is a multi-subunit complex, the composition of which varies with external and internal environmental conditions. It is composed of at least eIF4A, eIF4E and eIF4G. eIF4E is also known to interact with other partners. Enriched in the germline.

In terms of biological role, recognizes and binds the 7-methylguanosine-containing mRNA cap during an early step in the initiation of protein synthesis and facilitates ribosome binding by inducing the unwinding of the mRNAs secondary structures. All 5 eIF4E proteins bind monomethyl cap structures. Only ife-1, ife-2 and ife-5 bind trimethyl cap structures which result from trans-splicing. Translation of trimethyl cap structure mRNAs may be regulated by intracellular redox state; disulfide bonds change the width and depth of the cap-binding cavity determining selectivity to mRNA caps. The sequence is that of Eukaryotic translation initiation factor 4E-5 (ife-5) from Caenorhabditis elegans.